The following is a 434-amino-acid chain: Nicotinate phosphoribosyltransferase (434 aa).

Residue His-242 is modified to Phosphohistidine; by autocatalysis.

Belongs to the NAPRTase family. Transiently phosphorylated on a His residue during the reaction cycle. Phosphorylation strongly increases the affinity for substrates and increases the rate of nicotinate D-ribonucleotide production. Dephosphorylation regenerates the low-affinity form of the enzyme, leading to product release.

It carries out the reaction nicotinate + 5-phospho-alpha-D-ribose 1-diphosphate + ATP + H2O = nicotinate beta-D-ribonucleotide + ADP + phosphate + diphosphate. It participates in cofactor biosynthesis; NAD(+) biosynthesis; nicotinate D-ribonucleotide from nicotinate: step 1/1. Catalyzes the synthesis of beta-nicotinate D-ribonucleotide from nicotinate and 5-phospho-D-ribose 1-phosphate at the expense of ATP. This Brucella canis (strain ATCC 23365 / NCTC 10854 / RM-666) protein is Nicotinate phosphoribosyltransferase.